The chain runs to 241 residues: Large ribosomal subunit protein uL3 (241 aa).

Disordered regions lie at residues 139-164 and 215-241; these read VSHRSIGSTGGRQDPGKTFKNKKMPG and DAPKPGKFRLANGGEEAAAPAAEQEGV. Gln151 carries the post-translational modification N5-methylglutamine. Over residues 225 to 241 the composition is skewed to low complexity; the sequence is ANGGEEAAAPAAEQEGV.

The protein belongs to the universal ribosomal protein uL3 family. As to quaternary structure, part of the 50S ribosomal subunit. Forms a cluster with proteins L14 and L19. Post-translationally, methylated by PrmB.

One of the primary rRNA binding proteins, it binds directly near the 3'-end of the 23S rRNA, where it nucleates assembly of the 50S subunit. In Rhodopseudomonas palustris (strain HaA2), this protein is Large ribosomal subunit protein uL3.